The chain runs to 480 residues: MFS-type transporter oryF (480 aa).

The segment covering 1–10 has biased composition (basic and acidic residues); sequence MAEEVNERTR. Residues 1-24 form a disordered region; sequence MAEEVNERTRLLSQSDDPSPSLEE. The span at 11 to 22 shows a compositional bias: low complexity; it reads LLSQSDDPSPSL. 12 helical membrane-spanning segments follow: residues 41–61, 81–101, 107–127, 138–158, 170–190, 197–217, 264–284, 308–328, 351–371, 378–398, 415–435, and 443–463; these read LCIA…AIIV, AFVS…GPLS, ISLL…CAFA, FITG…IGDL, LYTL…AYIV, AIFA…LCTL, FLGT…LFGL, ALNY…TGSL, ILML…GWSA, IMPN…YQCI, GALT…APLI, and WGSS…PILL.

The protein belongs to the major facilitator superfamily.

The protein localises to the membrane. Its function is as follows. MFS-type transporter; part of the gene cluster that mediates the biosynthesis of oryzines, natural products with an unusual maleidride backbone. The polypeptide is MFS-type transporter oryF (Aspergillus oryzae (strain ATCC 42149 / RIB 40) (Yellow koji mold)).